The following is a 408-amino-acid chain: ATP phosphoribosyltransferase regulatory subunit (408 aa).

The protein belongs to the class-II aminoacyl-tRNA synthetase family. HisZ subfamily. In terms of assembly, heteromultimer composed of HisG and HisZ subunits.

It is found in the cytoplasm. It participates in amino-acid biosynthesis; L-histidine biosynthesis; L-histidine from 5-phospho-alpha-D-ribose 1-diphosphate: step 1/9. Functionally, required for the first step of histidine biosynthesis. May allow the feedback regulation of ATP phosphoribosyltransferase activity by histidine. The protein is ATP phosphoribosyltransferase regulatory subunit of Thermosynechococcus vestitus (strain NIES-2133 / IAM M-273 / BP-1).